The sequence spans 512 residues: 2,3-bisphosphoglycerate-independent phosphoglycerate mutase (512 aa).

Mn(2+) is bound by residues Asp-11 and Ser-61. Ser-61 serves as the catalytic Phosphoserine intermediate. Substrate-binding positions include His-122, Arg-152–Asp-153, Arg-184, Arg-190, Arg-259–Arg-262, and Lys-332. Residues Asp-399, His-403, Asp-440, His-441, and His-459 each coordinate Mn(2+).

Belongs to the BPG-independent phosphoglycerate mutase family. Monomer. Mn(2+) serves as cofactor.

It carries out the reaction (2R)-2-phosphoglycerate = (2R)-3-phosphoglycerate. It participates in carbohydrate degradation; glycolysis; pyruvate from D-glyceraldehyde 3-phosphate: step 3/5. In terms of biological role, catalyzes the interconversion of 2-phosphoglycerate and 3-phosphoglycerate. This Francisella tularensis subsp. tularensis (strain WY96-3418) protein is 2,3-bisphosphoglycerate-independent phosphoglycerate mutase.